Consider the following 807-residue polypeptide: Leucine--tRNA ligase (807 aa).

A 'HIGH' region motif is present at residues 40-51; that stretch reads PYPSGTGLHVGH. A 'KMSKS' region motif is present at residues 576–580; the sequence is KMSKS. Residue lysine 579 participates in ATP binding.

This sequence belongs to the class-I aminoacyl-tRNA synthetase family.

It is found in the cytoplasm. The enzyme catalyses tRNA(Leu) + L-leucine + ATP = L-leucyl-tRNA(Leu) + AMP + diphosphate. The polypeptide is Leucine--tRNA ligase (Pelodictyon phaeoclathratiforme (strain DSM 5477 / BU-1)).